We begin with the raw amino-acid sequence, 533 residues long: Glucose-6-phosphate isomerase (533 aa).

The active-site Proton donor is E330. Active-site residues include H359 and K461.

The protein belongs to the GPI family.

The protein localises to the cytoplasm. The catalysed reaction is alpha-D-glucose 6-phosphate = beta-D-fructose 6-phosphate. It functions in the pathway carbohydrate biosynthesis; gluconeogenesis. Its pathway is carbohydrate degradation; glycolysis; D-glyceraldehyde 3-phosphate and glycerone phosphate from D-glucose: step 2/4. In terms of biological role, catalyzes the reversible isomerization of glucose-6-phosphate to fructose-6-phosphate. In Prochlorococcus marinus (strain SARG / CCMP1375 / SS120), this protein is Glucose-6-phosphate isomerase.